We begin with the raw amino-acid sequence, 233 residues long: Putative N-acetylmannosamine-6-phosphate 2-epimerase (233 aa).

The protein belongs to the NanE family.

It carries out the reaction an N-acyl-D-glucosamine 6-phosphate = an N-acyl-D-mannosamine 6-phosphate. Its pathway is amino-sugar metabolism; N-acetylneuraminate degradation; D-fructose 6-phosphate from N-acetylneuraminate: step 3/5. Converts N-acetylmannosamine-6-phosphate (ManNAc-6-P) to N-acetylglucosamine-6-phosphate (GlcNAc-6-P). The protein is Putative N-acetylmannosamine-6-phosphate 2-epimerase of Yersinia pseudotuberculosis serotype O:1b (strain IP 31758).